A 385-amino-acid polypeptide reads, in one-letter code: tRNA(Met) cytidine acetate ligase (385 aa).

Residues Val-7–Leu-20, Gly-101, Asn-153, and Arg-178 contribute to the ATP site.

This sequence belongs to the TmcAL family.

It is found in the cytoplasm. It catalyses the reaction cytidine(34) in elongator tRNA(Met) + acetate + ATP = N(4)-acetylcytidine(34) in elongator tRNA(Met) + AMP + diphosphate. Functionally, catalyzes the formation of N(4)-acetylcytidine (ac(4)C) at the wobble position of elongator tRNA(Met), using acetate and ATP as substrates. First activates an acetate ion to form acetyladenylate (Ac-AMP) and then transfers the acetyl group to tRNA to form ac(4)C34. This chain is tRNA(Met) cytidine acetate ligase, found in Lactobacillus gasseri (strain ATCC 33323 / DSM 20243 / BCRC 14619 / CIP 102991 / JCM 1131 / KCTC 3163 / NCIMB 11718 / NCTC 13722 / AM63).